The following is a 229-amino-acid chain: MELLLLSNSTLPGKAWLEHALPLIANQLNGRRSAVFIPFAGVTQTWDEYTDKTAEVLAPLGVNVTGIHRVADPLAAIEKAEIIIVGGGNTFQLLKESRERGLLAPMADRVKRGALYIGWSAGANLACPAIRTTNDMPIVDPNGFDALDLFPLQINPHFTNALPEGHKGETREQRIRELLVVAPELTVIGLPEGNWIQVSNGQAVLGGPNTTWVFKAGEEAVALEAGHRF.

Residues serine 120, aspartate 135, and histidine 157 each act as charge relay system in the active site.

The protein belongs to the peptidase S51 family.

It is found in the cytoplasm. The catalysed reaction is Dipeptidase E catalyzes the hydrolysis of dipeptides Asp-|-Xaa. It does not act on peptides with N-terminal Glu, Asn or Gln, nor does it cleave isoaspartyl peptides.. In terms of biological role, hydrolyzes dipeptides containing N-terminal aspartate residues. May play a role in allowing the cell to use peptide aspartate to spare carbon otherwise required for the synthesis of the aspartate family of amino acids. The protein is Peptidase E of Salmonella paratyphi C (strain RKS4594).